The chain runs to 161 residues: TRAF-interacting protein with FHA domain-containing protein B (161 aa).

Residues 36–91 (LLLGRGQDAHLQLQLPRLSRRHLSLEPYLEKGSALLAFCLKALSRKGCVWVNGLTL) enclose the FHA domain.

As to quaternary structure, interacts with TIFA.

Its function is as follows. Inhibits TIFA-mediated TRAF6 activation possibly by inducing a conformational change in TIFA. The sequence is that of TRAF-interacting protein with FHA domain-containing protein B from Homo sapiens (Human).